Consider the following 198-residue polypeptide: Probable thymidylate kinase (198 aa).

7–14 serves as a coordination point for ATP; it reads GIDGAGKS.

This sequence belongs to the thymidylate kinase family.

It carries out the reaction dTMP + ATP = dTDP + ADP. This Methanocorpusculum labreanum (strain ATCC 43576 / DSM 4855 / Z) protein is Probable thymidylate kinase.